The sequence spans 554 residues: Formate--tetrahydrofolate ligase (554 aa).

67–74 (TPTGEGKT) contributes to the ATP binding site.

This sequence belongs to the formate--tetrahydrofolate ligase family.

It catalyses the reaction (6S)-5,6,7,8-tetrahydrofolate + formate + ATP = (6R)-10-formyltetrahydrofolate + ADP + phosphate. It participates in one-carbon metabolism; tetrahydrofolate interconversion. This chain is Formate--tetrahydrofolate ligase, found in Finegoldia magna (strain ATCC 29328 / DSM 20472 / WAL 2508) (Peptostreptococcus magnus).